Here is a 525-residue protein sequence, read N- to C-terminus: MNEIDEKNQAPVQQECLKEMIQNGHARRMGSVEDLYVALNRQNLYRNFCTYGELSDYCTRDQLTLALREICLKNPTLLHIVLPTRWPNHENYYRSSEYYSRPHPVHDYISVLQELKLSGVVLNEQPEYSAVMKQILEEFKNSKGSYTAKIFKLTTTLTIPYFGPTGPSWRLICLPEEHTEKWKKFIFVSNHCMSDGRSSIHFFHDLRDELNNIKTPPKKLDYIFKYEEDYQLLRKLPEPIEKVIDFRPPYLFIPKSLLSGFIYNHLRFSSKGVCMRMDDVEKTDDVVTEIINISPTEFQAIKANIKSNIQGKCTITPFLHVCWFVSLHKWGKFFKPLNFEWLTDIFIPADCRSQLPDDDEMRQMYRYGANVGFIDFTPWISEFDMNDNKENFWPLIEHYHEVISEALRNKKHLHGLGFNIQGFVQKYVNIDKVMCDRAIGKRRGGTLLSNVGLFNQLEEPDAKYSICDLAFGQFQGSWHQAFSLGVCSTNVKGMNIVVASTKNVVGSQESLEELCSIYKALLLGP.

Positions 24 to 41 (GHARRMGSVEDLYVALNR) are membrane association. Active-site charge relay system residues include His-191 and Asp-195. Positions 508–525 (QESLEELCSIYKALLLGP) are membrane association.

This sequence belongs to the ATF1 alcohol acetyltransferase family.

It localises to the lipid droplet. The protein resides in the endoplasmic reticulum membrane. It catalyses the reaction an aliphatic alcohol + acetyl-CoA = an acetyl ester + CoA. The catalysed reaction is a fatty acyl-CoA + H2O = a fatty acid + CoA + H(+). It carries out the reaction 3-methylbutanol + acetyl-CoA = 3-methylbutyl acetate + CoA. Its activity is regulated as follows. Found to be inhibited by cadmium, copper, zinc and mercurium divalent cations and sulfhydryl reagents. Inhibited by the addition of unsaturated fatty acids to the culture. Its function is as follows. Major alcohol O-acetyltransferase that uses acetyl-CoA to synthesize acetate esters from various alcohols, producing ethyl acetate, isoamyl acetate, isobutyl acetate, butyl acetate, hexyl acetate, heptyl acetate and octyl acetate. The alcohol acyltransferase activity is promiscuous with regard to alcohol but relatively specific for acetyl-CoA since ATF1 does not use any other acyl-CoAs (C3, C4, C5, C6, C8, C10, C12). Acts also as an efficient thioesterase in vitro with specificity towards medium-chain-length acyl-CoAs. In natural environments, the production of aromatic volatile metabolites promotes dispersal through insect vectors. The polypeptide is Alcohol O-acetyltransferase 1 (Saccharomyces cerevisiae (strain ATCC 204508 / S288c) (Baker's yeast)).